The sequence spans 156 residues: Small ribosomal subunit protein uS7 (156 aa).

This sequence belongs to the universal ribosomal protein uS7 family. In terms of assembly, part of the 30S ribosomal subunit. Contacts proteins S9 and S11.

Functionally, one of the primary rRNA binding proteins, it binds directly to 16S rRNA where it nucleates assembly of the head domain of the 30S subunit. Is located at the subunit interface close to the decoding center, probably blocks exit of the E-site tRNA. This Streptococcus mutans serotype c (strain ATCC 700610 / UA159) protein is Small ribosomal subunit protein uS7.